A 383-amino-acid chain; its full sequence is Cyclin-D4-2 (383 aa).

Residues 51-62 (AAGGGGGSGGGG) show a composition bias toward gly residues. Disordered stretches follow at residues 51–70 (AAGG…EDMF), 313–335 (QPKP…PESP), and 354–383 (ATIA…KLSR). Residues 323–335 (SASASSSSVPESP) show a composition bias toward low complexity.

It belongs to the cyclin family. Cyclin D subfamily.

The polypeptide is Cyclin-D4-2 (CYCD4-2) (Oryza sativa subsp. japonica (Rice)).